Consider the following 346-residue polypeptide: Elongation factor Ts (346 aa).

Positions 80 to 83 (TDFV) are involved in Mg(2+) ion dislocation from EF-Tu.

This sequence belongs to the EF-Ts family.

It is found in the cytoplasm. Associates with the EF-Tu.GDP complex and induces the exchange of GDP to GTP. It remains bound to the aminoacyl-tRNA.EF-Tu.GTP complex up to the GTP hydrolysis stage on the ribosome. The sequence is that of Elongation factor Ts from Streptococcus pneumoniae (strain 70585).